The chain runs to 421 residues: Polygalacturonase (421 aa).

The signal sequence occupies residues 1 to 20; the sequence is MKFSTAIIVSFLFIADFCAA. N-linked (GlcNAc...) asparagine glycans are attached at residues N156 and N180. PbH1 repeat units follow at residues 178-204 and 205-226; these read CKNI…HMGK and STDV…SIGD. The active-site Proton donor is D219. Residue H242 is part of the active site. PbH1 repeat units follow at residues 258-279 and 289-310; these read VEGI…RIKT and VSDI…IIDQ. N265 carries N-linked (GlcNAc...) asparagine glycosylation. Residues 394–421 form a disordered region; the sequence is PGAPAASTTATPAASKTATPAAGKSPAK.

The protein belongs to the glycosyl hydrolase 28 family. In terms of tissue distribution, pollen specific.

It localises to the secreted. Its subcellular location is the cell wall. It catalyses the reaction (1,4-alpha-D-galacturonosyl)n+m + H2O = (1,4-alpha-D-galacturonosyl)n + (1,4-alpha-D-galacturonosyl)m.. In terms of biological role, may function in the depolymerization of the pectin in its walls during pollen tube elongation, or in that of the pistil during pollination. This Medicago sativa (Alfalfa) protein is Polygalacturonase.